The chain runs to 103 residues: N(4)-acetylcytidine amidohydrolase (103 aa).

The 89-residue stretch at 6–94 folds into the ASCH domain; it reads ITFFQRFQND…IAEIYPNQTQ (89 aa). Lys21 functions as the Proton acceptor in the catalytic mechanism. The active-site Nucleophile is Thr24. Glu74 serves as the catalytic Proton donor.

The protein belongs to the N(4)-acetylcytidine amidohydrolase family.

It carries out the reaction N(4)-acetylcytidine + H2O = cytidine + acetate + H(+). It catalyses the reaction N(4)-acetyl-2'-deoxycytidine + H2O = 2'-deoxycytidine + acetate + H(+). The catalysed reaction is N(4)-acetylcytosine + H2O = cytosine + acetate + H(+). In terms of biological role, catalyzes the hydrolysis of N(4)-acetylcytidine (ac4C). The polypeptide is N(4)-acetylcytidine amidohydrolase (yqfB) (Salmonella heidelberg (strain SL476)).